The following is a 597-amino-acid chain: Hydrogenase-1 large chain (597 aa).

Residues cysteine 76, cysteine 79, cysteine 576, and cysteine 579 each coordinate Ni(2+).

It belongs to the [NiFe]/[NiFeSe] hydrogenase large subunit family. In terms of assembly, heterodimer of a large and a small subunit. Ni(2+) serves as cofactor.

The protein localises to the cell membrane. It carries out the reaction H2 + A = AH2. Functionally, this is one of three E.coli hydrogenases synthesized in response to different physiological conditions. HYD1 is believed to have a role in hydrogen cycling during fermentative growth. This is Hydrogenase-1 large chain (hyaB) from Escherichia coli (strain K12).